The chain runs to 396 residues: Tryptophan synthase beta chain (396 aa).

Lys86 carries the N6-(pyridoxal phosphate)lysine modification.

Belongs to the TrpB family. In terms of assembly, tetramer of two alpha and two beta chains. Pyridoxal 5'-phosphate serves as cofactor.

The enzyme catalyses (1S,2R)-1-C-(indol-3-yl)glycerol 3-phosphate + L-serine = D-glyceraldehyde 3-phosphate + L-tryptophan + H2O. It functions in the pathway amino-acid biosynthesis; L-tryptophan biosynthesis; L-tryptophan from chorismate: step 5/5. Functionally, the beta subunit is responsible for the synthesis of L-tryptophan from indole and L-serine. The chain is Tryptophan synthase beta chain from Sodalis glossinidius (strain morsitans).